The sequence spans 259 residues: Ribosomal RNA small subunit methyltransferase A (259 aa).

Asn-13, Leu-15, Gly-40, Glu-61, Asp-85, and Asn-103 together coordinate S-adenosyl-L-methionine.

The protein belongs to the class I-like SAM-binding methyltransferase superfamily. rRNA adenine N(6)-methyltransferase family. RsmA subfamily.

The protein resides in the cytoplasm. The enzyme catalyses adenosine(1518)/adenosine(1519) in 16S rRNA + 4 S-adenosyl-L-methionine = N(6)-dimethyladenosine(1518)/N(6)-dimethyladenosine(1519) in 16S rRNA + 4 S-adenosyl-L-homocysteine + 4 H(+). Functionally, specifically dimethylates two adjacent adenosines (A1518 and A1519) in the loop of a conserved hairpin near the 3'-end of 16S rRNA in the 30S particle. May play a critical role in biogenesis of 30S subunits. The chain is Ribosomal RNA small subunit methyltransferase A from Neisseria meningitidis serogroup C / serotype 2a (strain ATCC 700532 / DSM 15464 / FAM18).